Here is a 152-residue protein sequence, read N- to C-terminus: UPF0178 protein Bcer98_3021 (152 aa).

The protein belongs to the UPF0178 family.

The protein is UPF0178 protein Bcer98_3021 of Bacillus cytotoxicus (strain DSM 22905 / CIP 110041 / 391-98 / NVH 391-98).